The sequence spans 266 residues: Vitamin B12-binding protein (266 aa).

Residues 1 to 22 (MAKQMFRALGALLLTLPVWLYA) form the signal peptide. A Fe/B12 periplasmic-binding domain is found at 25–266 (RVITLSPANT…QLCNALSQVN (242 aa)). Residues tyrosine 50 and 242 to 246 (DWFER) each bind cyanocob(III)alamin. A disulfide bond links cysteine 183 and cysteine 259.

Belongs to the BtuF family. As to quaternary structure, the complex is composed of two ATP-binding proteins (BtuD), two transmembrane proteins (BtuC) and a solute-binding protein (BtuF).

The protein localises to the periplasm. Its function is as follows. Part of the ABC transporter complex BtuCDF involved in vitamin B12 import. Binds vitamin B12 and delivers it to the periplasmic surface of BtuC. This Salmonella typhi protein is Vitamin B12-binding protein.